A 155-amino-acid chain; its full sequence is 6,7-dimethyl-8-ribityllumazine synthase (155 aa).

5-amino-6-(D-ribitylamino)uracil is bound by residues F23, 57 to 59 (AFE), and 81 to 83 (AVI). 86–87 (ST) contributes to the (2S)-2-hydroxy-3-oxobutyl phosphate binding site. H89 acts as the Proton donor in catalysis. Residue F114 participates in 5-amino-6-(D-ribitylamino)uracil binding. R128 is a binding site for (2S)-2-hydroxy-3-oxobutyl phosphate.

It belongs to the DMRL synthase family.

It catalyses the reaction (2S)-2-hydroxy-3-oxobutyl phosphate + 5-amino-6-(D-ribitylamino)uracil = 6,7-dimethyl-8-(1-D-ribityl)lumazine + phosphate + 2 H2O + H(+). It participates in cofactor biosynthesis; riboflavin biosynthesis; riboflavin from 2-hydroxy-3-oxobutyl phosphate and 5-amino-6-(D-ribitylamino)uracil: step 1/2. Catalyzes the formation of 6,7-dimethyl-8-ribityllumazine by condensation of 5-amino-6-(D-ribitylamino)uracil with 3,4-dihydroxy-2-butanone 4-phosphate. This is the penultimate step in the biosynthesis of riboflavin. This chain is 6,7-dimethyl-8-ribityllumazine synthase, found in Geobacter metallireducens (strain ATCC 53774 / DSM 7210 / GS-15).